Here is a 119-residue protein sequence, read N- to C-terminus: DNA-binding protein MMP0157 (119 aa).

Basic and acidic residues predominate over residues 1 to 12 (MNPEEIRQRRLQ). Residues 1-35 (MNPEEIRQRRLQEMQAKAQAQGAANDPEAQRQMQE) form a disordered region.

The protein belongs to the PDCD5 family.

This Methanococcus maripaludis (strain DSM 14266 / JCM 13030 / NBRC 101832 / S2 / LL) protein is DNA-binding protein MMP0157.